The following is a 286-amino-acid chain: Digeranylgeranylglyceryl phosphate synthase (286 aa).

8 consecutive transmembrane segments (helical) span residues 21–41 (AVAAGVLTFTGAFVAGGFAVT), 42–62 (TAHVTGAVAATIFATAAGNAI), 96–116 (FLFVAAVVSTSVLPLIAIVLA), 133–155 (LPGVGNAIVAYLTGSTFLFGAAA), 162–181 (FGVVVLFILAALATATREII), 214–234 (VLLVAVIASIVPYVIGIFGIW), 235–255 (YLTLVVPADMIMLIGVWQAPD), and 266–286 (RGMFVAAAAFVVGRAVVVAGI).

The protein belongs to the UbiA prenyltransferase family. DGGGP synthase subfamily. Requires Mg(2+) as cofactor.

Its subcellular location is the cell membrane. It carries out the reaction sn-3-O-(geranylgeranyl)glycerol 1-phosphate + (2E,6E,10E)-geranylgeranyl diphosphate = 2,3-bis-O-(geranylgeranyl)-sn-glycerol 1-phosphate + diphosphate. It functions in the pathway membrane lipid metabolism; glycerophospholipid metabolism. In terms of biological role, prenyltransferase that catalyzes the transfer of the geranylgeranyl moiety of geranylgeranyl diphosphate (GGPP) to the C2 hydroxyl of (S)-3-O-geranylgeranylglyceryl phosphate (GGGP). This reaction is the second ether-bond-formation step in the biosynthesis of archaeal membrane lipids. The sequence is that of Digeranylgeranylglyceryl phosphate synthase from Haloquadratum walsbyi (strain DSM 16790 / HBSQ001).